The sequence spans 95 residues: ATP-dependent Clp protease adapter protein ClpS (95 aa).

This sequence belongs to the ClpS family. As to quaternary structure, binds to the N-terminal domain of the chaperone ClpA.

Involved in the modulation of the specificity of the ClpAP-mediated ATP-dependent protein degradation. This Synechococcus elongatus (strain ATCC 33912 / PCC 7942 / FACHB-805) (Anacystis nidulans R2) protein is ATP-dependent Clp protease adapter protein ClpS.